Consider the following 618-residue polypeptide: MSQLSSTLKRYTESSRYTDAPYAKSGYGTYTPSSYGANLAASFLEKEKLGFKPVSPTSFLPRPRTYGPSSILDCDRGRPLLRSDITGGSKRSESQTRGNERPSGSGLNGGSGFPYGVTSNSLSYLPMNARDQGVTLGQKKSNSQSDLARDFSSLRTSDSYRTSDGYRASDGFRIDPGNLGRSPMLARTRKELCALQGLYQAASRSEYLTDYLENYGRKGSAPQVLTQAPPSRVPEVLSPTYRPSGRYTLWEKNKGQASGPSRSTSPGRDTMNSKSAQGLAGLRNLGNTCFMNSILQCLSNTRELRDYCLQRLYMRDLGHTSSAHTALMEEFAKLIQTIWTSSPNDVVSPSEFKTQIQRYAPRFVGYNQQDAQEFLRFLLDGLHNEVNRVAARPKPSPESLDHLPDEEKGRQMWRKYLEREDSRIGDLFVGQLKSSLTCTDCGYCSTVFDPFWDLSLPIAKRGYPEVTLMDCMRLFTKEDVLDGDEKPTCCRCRARKRCIKKFSVQRFPKILVLHLKRFSESRIRTSKLTTFVNFPLRDLDLREFASENTNHAVYNLYAVSNHSGTTMGGHYTAYCRSPVTGEWHTFNDSSVTPMSSSQVRTSDAYLLFYELASPPSRM.

The interval 1–213 (MSQLSSTLKR…RSEYLTDYLE (213 aa)) is necessary for interaction with MDM4. Disordered stretches follow at residues 54–112 (VSPT…GGSG) and 246–274 (RYTLWEKNKGQASGPSRSTSPGRDTMNSK). The segment covering 90-100 (KRSESQTRGNE) has biased composition (basic and acidic residues). Polar residues predominate over residues 255–274 (GQASGPSRSTSPGRDTMNSK). The USP domain occupies 280-612 (AGLRNLGNTC…DAYLLFYELA (333 aa)). Cys-289 functions as the Nucleophile in the catalytic mechanism. The interval 416-516 (YLEREDSRIG…FPKILVLHLK (101 aa)) is necessary for interaction with MDM4. Zn(2+)-binding residues include Cys-438, Cys-441, Cys-489, and Cys-492. His-570 (proton acceptor) is an active-site residue.

It belongs to the peptidase C19 family. USP2 subfamily. Homooligomer. Found in trimeric complex with MDM2 and MDM4 and USP2. Interacts with CCND1; the interaction is direct and promotes its stabilization by antagonizing ubiquitin-dependent degradation. Interacts (via N-terminus and C-terminus) with MDM2. Interacts with MDM4. Interacts with PER1. Interacts with KCNQ1; counteracts the NEDD4L-specific down-regulation of I(Ks) and restores plasma membrane localization of KCNQ1. Isoform 4: Interacts with NHERF4 and CLTC. In terms of tissue distribution, expressed in mesangial cells of the kidney. Isoform 1 and isoform 2 are expressed in elongated spermatids; the shorter form appearing earlier than the longer form (at protein level). Isoform 1 and isoform 2 are expressed in early round spermatids of the testis. Isoform 1 is expressed in muscle and heart. Isoform 2 is expressed in muscle, lung, heart, brain, liver and ovary. During muscle differentiation, isoform 1 expression increases before the onset of membrane fusion and decreases as the myogenic processes proceeded; un counterpart, isoform 2 expression remains low until the burst of membrane fusion but increases thereafter.

The protein localises to the cytoplasm. The protein resides in the perinuclear region. Its subcellular location is the nucleus. It localises to the membrane. It catalyses the reaction Thiol-dependent hydrolysis of ester, thioester, amide, peptide and isopeptide bonds formed by the C-terminal Gly of ubiquitin (a 76-residue protein attached to proteins as an intracellular targeting signal).. Its activity is regulated as follows. Cleavage is inhibited by ubiquitin in a dosage-dependent manner. Cleavage is blocked by ubiquitin aldehyde. Functionally, hydrolase that deubiquitinates polyubiquitinated target proteins such as MDM2, MDM4 and CCND1. Isoform 1 and isoform 2 possess both ubiquitin-specific peptidase and isopeptidase activities. Deubiquitinates MDM2 without reversing MDM2-mediated p53/TP53 ubiquitination and thus indirectly promotes p53/TP53 degradation and limits p53 activity. Has no deubiquitinase activity against p53/TP53. Prevents MDM2-mediated degradation of MDM4. Plays a role in the G1/S cell-cycle progression in normal and cancer cells. Regulates the circadian clock by modulating its intrinsic circadian rhythm and its capacity to respond to external cues. Associates with clock proteins and deubiquitinates core clock component PER1 but does not affect its overall stability. Regulates the nucleocytoplasmic shuttling and nuclear retention of PER1 and its repressive role on the clock transcription factors CLOCK and BMAL1. Plays a role in the regulation of myogenic differentiation of embryonic muscle cells. In terms of biological role, circadian clock output effector that regulates Ca(2+) absorption in the small intestine. Probably functions by regulating protein levels of the membrane scaffold protein NHERF4 in a rhythmic manner, and is therefore likely to control Ca(2+) membrane permeability mediated by the Ca(2+) channel TRPV6 in the intestine. This Rattus norvegicus (Rat) protein is Ubiquitin carboxyl-terminal hydrolase 2 (Usp2).